Consider the following 200-residue polypeptide: Endochitinase (200 aa).

Residue Glu58 is the Proton donor of the active site.

This sequence belongs to the glycosyl hydrolase 19 family. Chitinase class I subfamily.

It catalyses the reaction Random endo-hydrolysis of N-acetyl-beta-D-glucosaminide (1-&gt;4)-beta-linkages in chitin and chitodextrins.. In terms of biological role, this protein functions as a defense against chitin-containing fungal pathogens. This is Endochitinase from Avena sativa (Oat).